The primary structure comprises 384 residues: L-lactate dehydrogenase (384 aa).

An FMN hydroxy acid dehydrogenase domain is found at 1–380 (MIISSSNDYR…NESCLVEMNK (380 aa)). Residue Tyr24 participates in substrate binding. The FMN site is built by Ser106 and Gln127. Residue Tyr129 coordinates substrate. Residue Thr155 participates in FMN binding. Arg164 provides a ligand contact to substrate. Residue Lys251 participates in FMN binding. His275 acts as the Proton acceptor in catalysis. Arg278 contributes to the substrate binding site. 306–330 (DSGIRNGLDVVRMLALGADSVMLGR) serves as a coordination point for FMN.

The protein belongs to the FMN-dependent alpha-hydroxy acid dehydrogenase family. FMN is required as a cofactor.

The protein localises to the cell inner membrane. The enzyme catalyses (S)-lactate + A = pyruvate + AH2. Its function is as follows. Catalyzes the conversion of L-lactate to pyruvate. Is coupled to the respiratory chain. The sequence is that of L-lactate dehydrogenase from Acinetobacter baylyi (strain ATCC 33305 / BD413 / ADP1).